Reading from the N-terminus, the 332-residue chain is Ferredoxin--NADP reductase (332 aa).

Residues E36, Q44, Y49, V91, F124, and T327 each coordinate FAD.

The protein belongs to the ferredoxin--NADP reductase type 2 family. In terms of assembly, homodimer. Requires FAD as cofactor.

The enzyme catalyses 2 reduced [2Fe-2S]-[ferredoxin] + NADP(+) + H(+) = 2 oxidized [2Fe-2S]-[ferredoxin] + NADPH. In Streptococcus thermophilus (strain CNRZ 1066), this protein is Ferredoxin--NADP reductase.